We begin with the raw amino-acid sequence, 661 residues long: Polyadenylate-binding protein, cytoplasmic and nuclear (661 aa).

Positions 1–11 (MSAAETNQVQE) are enriched in polar residues. Positions 1 to 61 (MSAAETNQVQ…SAEEQGESSG (61 aa)) are disordered. Residues 20 to 51 (SSSSPAAGGATTATTTNNAESSDATSSSVPAD) show a composition bias toward low complexity. RRM domains are found at residues 67-145 (ASLY…WSQR), 155-232 (GNIF…KHVS), 248-325 (TNIY…RAQK), and 351-428 (VNLF…LAQR). The tract at residues 473 to 563 (FPPNGRGNAP…PNRPAGGNVP (91 aa)) is disordered. The span at 501 to 511 (EQWPRPGPNGQ) shows a compositional bias: pro residues. Positions 523–532 (QDFNGQNMRP) are enriched in polar residues. A compositionally biased stretch (low complexity) spans 533–549 (QQQQQQQQQQQQQQQQQ). One can recognise a PABC domain in the interval 563–644 (PAKDLAALIA…ALNAFEEYKN (82 aa)).

Belongs to the polyadenylate-binding protein type-1 family.

It is found in the cytoplasm. It localises to the nucleus. Its function is as follows. Binds the poly(A) tail of mRNA. Appears to be an important mediator of the multiple roles of the poly(A) tail in mRNA biogenesis, stability and translation. In the nucleus, involved in both mRNA cleavage and polyadenylation. Is also required for efficient mRNA export to the cytoplasm. Acts in concert with a poly(A)-specific nuclease (PAN) to affect poly(A) tail shortening, which may occur concomitantly with either nucleocytoplasmic mRNA transport or translational initiation. In the cytoplasm, stimulates translation initiation and regulates mRNA decay through translation termination-coupled poly(A) shortening, probably mediated by PAN. The protein is Polyadenylate-binding protein, cytoplasmic and nuclear (PAB1) of Lodderomyces elongisporus (strain ATCC 11503 / CBS 2605 / JCM 1781 / NBRC 1676 / NRRL YB-4239) (Yeast).